A 66-amino-acid polypeptide reads, in one-letter code: Large ribosomal subunit protein bL35 (66 aa).

Basic residues-rich tracts occupy residues 1 to 16 (MPKQ…RFKR) and 31 to 45 (HRFH…RQLR). Residues 1–52 (MPKQKTHRASAKRFKRTGNGGLKRSNAYTSHRFHGKTKKQRRQLRKASMVSA) are disordered.

It belongs to the bacterial ribosomal protein bL35 family.

This chain is Large ribosomal subunit protein bL35, found in Ligilactobacillus salivarius (strain UCC118) (Lactobacillus salivarius).